Here is a 417-residue protein sequence, read N- to C-terminus: Serine hydroxymethyltransferase 4 (417 aa).

(6S)-5,6,7,8-tetrahydrofolate contacts are provided by residues leucine 121 and 125–127 (GHL). The residue at position 230 (lysine 230) is an N6-(pyridoxal phosphate)lysine. A (6S)-5,6,7,8-tetrahydrofolate-binding site is contributed by 355–357 (SPF).

It belongs to the SHMT family. As to quaternary structure, homodimer. It depends on pyridoxal 5'-phosphate as a cofactor.

The protein resides in the cytoplasm. It catalyses the reaction (6R)-5,10-methylene-5,6,7,8-tetrahydrofolate + glycine + H2O = (6S)-5,6,7,8-tetrahydrofolate + L-serine. Its pathway is one-carbon metabolism; tetrahydrofolate interconversion. The protein operates within amino-acid biosynthesis; glycine biosynthesis; glycine from L-serine: step 1/1. Functionally, catalyzes the reversible interconversion of serine and glycine with tetrahydrofolate (THF) serving as the one-carbon carrier. This reaction serves as the major source of one-carbon groups required for the biosynthesis of purines, thymidylate, methionine, and other important biomolecules. Also exhibits THF-independent aldolase activity toward beta-hydroxyamino acids, producing glycine and aldehydes, via a retro-aldol mechanism. In Colwellia psychrerythraea (strain 34H / ATCC BAA-681) (Vibrio psychroerythus), this protein is Serine hydroxymethyltransferase 4.